Reading from the N-terminus, the 418-residue chain is Gamma-glutamyl phosphate reductase (418 aa).

This sequence belongs to the gamma-glutamyl phosphate reductase family.

The protein localises to the cytoplasm. It carries out the reaction L-glutamate 5-semialdehyde + phosphate + NADP(+) = L-glutamyl 5-phosphate + NADPH + H(+). Its pathway is amino-acid biosynthesis; L-proline biosynthesis; L-glutamate 5-semialdehyde from L-glutamate: step 2/2. Functionally, catalyzes the NADPH-dependent reduction of L-glutamate 5-phosphate into L-glutamate 5-semialdehyde and phosphate. The product spontaneously undergoes cyclization to form 1-pyrroline-5-carboxylate. The protein is Gamma-glutamyl phosphate reductase of Clostridium acetobutylicum (strain ATCC 824 / DSM 792 / JCM 1419 / IAM 19013 / LMG 5710 / NBRC 13948 / NRRL B-527 / VKM B-1787 / 2291 / W).